A 347-amino-acid polypeptide reads, in one-letter code: NADH-ubiquinone oxidoreductase chain 2 (347 aa).

The next 10 helical transmembrane spans lie at 4–21, 26–44, 59–79, 93–115, 149–169, 178–198, 200–220, 241–261, 274–294, and 323–343; these read LALI…VIVM, WLLV…IPVL, YFLT…TNLL, LAST…HFWV, LNLN…GWGG, ILAY…TYNP, LTLL…MLFM, ATSV…SGFL, ESIF…YFYM, and TPLL…APIL.

Belongs to the complex I subunit 2 family. In terms of assembly, core subunit of respiratory chain NADH dehydrogenase (Complex I) which is composed of 45 different subunits. Interacts with TMEM242.

It localises to the mitochondrion inner membrane. The catalysed reaction is a ubiquinone + NADH + 5 H(+)(in) = a ubiquinol + NAD(+) + 4 H(+)(out). Functionally, core subunit of the mitochondrial membrane respiratory chain NADH dehydrogenase (Complex I) which catalyzes electron transfer from NADH through the respiratory chain, using ubiquinone as an electron acceptor. Essential for the catalytic activity and assembly of complex I. This is NADH-ubiquinone oxidoreductase chain 2 from Cardioderma cor (Heart-nosed bat).